Reading from the N-terminus, the 968-residue chain is Insulin receptor substrate 1 (968 aa).

A PH domain is found at 8–109 (GMALSGYLKK…WLDKLLVLQR (102 aa)). Residues 122 to 236 (YDHVWQVVIQ…SAMSAKTESN (115 aa)) enclose the IRS-type PTB domain. Residues 248-269 (DLSHEPMRKRSSSANEASKPIN) form a disordered region. 2 positions are modified to phosphoserine: Ser286 and Ser287. Positions 304–329 (RNGTLSESSNQTYFGSNHGLRSNTIS) are enriched in polar residues. The interval 304–370 (RNGTLSESSN…VDESDDNGSF (67 aa)) is disordered. Position 342 is a phosphoserine (Ser342). The residue at position 411 (Tyr411) is a Phosphotyrosine; by INSR. Positions 411–414 (YIPM) match the YXXM motif 1 motif. A disordered region spans residues 528 to 555 (TANRSQSSITKEGTSYGSSANRQKKSTS). A compositionally biased stretch (polar residues) spans 529-555 (ANRSQSSITKEGTSYGSSANRQKKSTS). At Ser555 the chain carries Phosphoserine. The YXXM motif 2 signature appears at 641-644 (YLEM). Residues 697–711 (EKWREQPSRSEEKKS) show a composition bias toward basic and acidic residues. Residues 697–739 (EKWREQPSRSEEKKSNSPLNDNTFSSKPTNVESTSKSHDVHSA) form a disordered region. Over residues 712 to 730 (NSPLNDNTFSSKPTNVEST) the composition is skewed to polar residues. Tyr911 carries the phosphotyrosine; by INSR modification. A disordered region spans residues 922-968 (QNPAKYLKRGSRESPPVSACPEDGNTYAKIDFDQSDSSSSSSNIFNT). A phosphoserine mark is found at Ser932 and Ser935. Tyr948 is subject to Phosphotyrosine; by INSR. Low complexity predominate over residues 956-968 (SDSSSSSSNIFNT).

In terms of assembly, bindings to phosphatidylinositol 3-kinase and SHP2.

Functionally, activates phosphatidylinositol 3-kinase when bound to the regulatory p85 subunit. May mediate the control of various cellular processes by insulin-like peptides. When phosphorylated by the insulin receptor binds specifically to various cellular proteins containing SH2 domains. Involved in control of cell proliferation, cell size, and body and organ growth throughout development. Also has a role in a signaling pathway controlling the physiological response required to endure periods of low nutrient conditions. Insulin/insulin-like growth factor (IGF) signaling pathway has a role in regulating aging and is necessary in the ovary for vitellogenic maturation. This chain is Insulin receptor substrate 1 (chico), found in Drosophila melanogaster (Fruit fly).